Reading from the N-terminus, the 76-residue chain is ATP synthase subunit 9, mitochondrial (76 aa).

2 consecutive transmembrane segments (helical) span residues 14–34 and 52–72; these read IATI…AALI and ILGF…SFLL.

This sequence belongs to the ATPase C chain family. F-type ATPases have 2 components, CF(1) - the catalytic core - and CF(0) - the membrane proton channel. CF(1) has five subunits: alpha(3), beta(3), gamma(1), delta(1), epsilon(1). CF(0) has three main subunits: a, b and c.

It is found in the mitochondrion membrane. Functionally, mitochondrial membrane ATP synthase (F(1)F(0) ATP synthase or Complex V) produces ATP from ADP in the presence of a proton gradient across the membrane which is generated by electron transport complexes of the respiratory chain. F-type ATPases consist of two structural domains, F(1) - containing the extramembraneous catalytic core and F(0) - containing the membrane proton channel, linked together by a central stalk and a peripheral stalk. During catalysis, ATP synthesis in the catalytic domain of F(1) is coupled via a rotary mechanism of the central stalk subunits to proton translocation. Part of the complex F(0) domain. A homomeric c-ring of probably 10 subunits is part of the complex rotary element. This chain is ATP synthase subunit 9, mitochondrial (ATP9), found in Wickerhamomyces canadensis (Yeast).